Reading from the N-terminus, the 270-residue chain is DNA repair protein RecO (270 aa).

The tract at residues 202-221 (PELPPSTIDADTDNPSQPPS) is disordered.

This sequence belongs to the RecO family.

In terms of biological role, involved in DNA repair and RecF pathway recombination. The protein is DNA repair protein RecO of Rhodopirellula baltica (strain DSM 10527 / NCIMB 13988 / SH1).